A 440-amino-acid polypeptide reads, in one-letter code: MRRPLDPRDIPDELRRRLGLLDAVVIGLGSMIGAGIFAALAPAAYAAGSGLLLGLAVAAVVAYCNAISSARLAARYPASGGTYVYGRMRLGDFWGYLAGWGFVVGKTASCAAMALTVGFYVWPAQAHAVAVAVVVALTAVNYAGIQKSAWLTRSIVAVVLVVLTAVVVAAYGSGAADPARLDIGVDAHVWGMLQAAGLLFFAFAGYARIATLGEEVRDPARTIPRAIPLALGITLAVYALVAVAVIAVLGPQRLARAAAPLSEAMRVAGVNWLIPVVQIGAAVAALGSLLALILGVSRTTLAMARDRHLPRWLAAVHPRFKVPFRAELVVGAVVAALAATADIRGAIGFSSFGVLVYYAIANASALTLGLDEGRPRRLIPLVGLIGCVVLAFALPLSSVAAGAAVLGVGVAAYGVRRIITRRARQTDSGDTQRSGHPSAT.

12 consecutive transmembrane segments (helical) span residues 24-44 (VVIG…APAA), 47-67 (AGSG…CNAI), 93-113 (FWGY…CAAM), 117-137 (VGFY…VVAL), 155-175 (IVAV…GSGA), 183-203 (IGVD…FFAF), 229-249 (LALG…IAVL), 276-296 (VVQI…ILGV), 323-343 (PFRA…TADI), 346-366 (AIGF…ASAL), 379-399 (IPLV…LSSV), and 400-420 (AAGA…RIIT).

This sequence belongs to the amino acid-polyamine-organocation (APC) superfamily.

Its subcellular location is the cell membrane. Functionally, probable amino-acid or metabolite transport protein. This is an uncharacterized protein from Mycobacterium bovis (strain ATCC BAA-935 / AF2122/97).